Here is a 294-residue protein sequence, read N- to C-terminus: GTPase Era (294 aa).

The region spanning 2-171 is the Era-type G domain; that stretch reads NSGVVTIIGR…LSLLIELLPE (170 aa). The tract at residues 10-17 is G1; that stretch reads GRPSAGKS. 10–17 is a GTP binding site; that stretch reads GRPSAGKS. The interval 36 to 40 is G2; the sequence is QTTRN. Positions 57-60 are G3; sequence DTPG. GTP is bound by residues 57–61 and 119–122; these read DTPGY and NKAD. The G4 stretch occupies residues 119-122; that stretch reads NKAD. A G5 region spans residues 150–152; sequence ISA. One can recognise a KH type-2 domain in the interval 202-280; sequence TREEIPHALY…QLDLQVRVNK (79 aa).

The protein belongs to the TRAFAC class TrmE-Era-EngA-EngB-Septin-like GTPase superfamily. Era GTPase family. Monomer.

The protein resides in the cytoplasm. The protein localises to the cell inner membrane. Its function is as follows. An essential GTPase that binds both GDP and GTP, with rapid nucleotide exchange. Plays a role in 16S rRNA processing and 30S ribosomal subunit biogenesis and possibly also in cell cycle regulation and energy metabolism. The polypeptide is GTPase Era (Treponema denticola (strain ATCC 35405 / DSM 14222 / CIP 103919 / JCM 8153 / KCTC 15104)).